We begin with the raw amino-acid sequence, 339 residues long: Uroporphyrinogen decarboxylase (339 aa).

Substrate-binding positions include 21 to 25 (RQAGR), D71, Y147, S202, and H315.

The protein belongs to the uroporphyrinogen decarboxylase family. Homodimer.

It is found in the cytoplasm. The catalysed reaction is uroporphyrinogen III + 4 H(+) = coproporphyrinogen III + 4 CO2. Its pathway is porphyrin-containing compound metabolism; protoporphyrin-IX biosynthesis; coproporphyrinogen-III from 5-aminolevulinate: step 4/4. Its function is as follows. Catalyzes the decarboxylation of four acetate groups of uroporphyrinogen-III to yield coproporphyrinogen-III. The chain is Uroporphyrinogen decarboxylase from Helicobacter pylori (strain P12).